The chain runs to 429 residues: 3-isopropylmalate dehydratase large subunit (429 aa).

Positions 303, 363, and 366 each coordinate [4Fe-4S] cluster.

This sequence belongs to the aconitase/IPM isomerase family. LeuC type 2 subfamily. Heterodimer of LeuC and LeuD. The cofactor is [4Fe-4S] cluster.

The catalysed reaction is (2R,3S)-3-isopropylmalate = (2S)-2-isopropylmalate. The protein operates within amino-acid biosynthesis; L-leucine biosynthesis; L-leucine from 3-methyl-2-oxobutanoate: step 2/4. Catalyzes the isomerization between 2-isopropylmalate and 3-isopropylmalate, via the formation of 2-isopropylmaleate. This is 3-isopropylmalate dehydratase large subunit from Caldicellulosiruptor bescii (strain ATCC BAA-1888 / DSM 6725 / KCTC 15123 / Z-1320) (Anaerocellum thermophilum).